A 190-amino-acid chain; its full sequence is Dynactin subunit 6 (190 aa).

Residue Thr-186 is modified to Phosphothreonine; by CDK1.

This sequence belongs to the dynactin subunits 5/6 family. Dynactin subunit 6 subfamily. Subunit of dynactin, a multiprotein complex part of a tripartite complex with dynein and a adapter, such as BICDL1, BICD2 or HOOK3. The dynactin complex is built around ACTR1A/ACTB filament and consists of an actin-related filament composed of a shoulder domain, a pointed end and a barbed end. Its length is defined by its flexible shoulder domain. The soulder is composed of 2 DCTN1 subunits, 4 DCTN2 and 2 DCTN3. The 4 DCNT2 (via N-terminus) bind the ACTR1A filament and act as molecular rulers to determine the length. The pointed end is important for binding dynein-dynactin cargo adapters. Consists of 4 subunits: ACTR10, DCNT4, DCTN5 and DCTN6. Within the complex DCTN6 forms a heterodimer with DCTN5. The barbed end is composed of a CAPZA1:CAPZB heterodimers, which binds ACTR1A/ACTB filament and dynactin and stabilizes dynactin. Interacts with PLK1. Interacts with N4BP2L1. Post-translationally, phosphorylation at Thr-186 by CDK1 during mitotic prometaphase creates a binding site for PLK1 that facilitates its recruitment to kinetochores.

It is found in the cytoplasm. The protein resides in the cytoskeleton. Its subcellular location is the chromosome. It localises to the centromere. The protein localises to the kinetochore. Functionally, part of the dynactin complex that activates the molecular motor dynein for ultra-processive transport along microtubules. The sequence is that of Dynactin subunit 6 (DCTN6) from Pongo abelii (Sumatran orangutan).